The primary structure comprises 45 residues: FKBP-type peptidyl-prolyl cis-trans isomerase, chloroplastic (45 aa).

The protein belongs to the FKBP-type PPIase family. As to expression, expressed in leaves, but not in roots.

It localises to the plastid. It is found in the chloroplast thylakoid lumen. The catalysed reaction is [protein]-peptidylproline (omega=180) = [protein]-peptidylproline (omega=0). PPIases accelerate the folding of proteins. It catalyzes the cis-trans isomerization of proline imidic peptide bonds in oligopeptides. The sequence is that of FKBP-type peptidyl-prolyl cis-trans isomerase, chloroplastic from Vicia faba (Broad bean).